The following is a 536-amino-acid chain: MSITAGPKVTTTAALVNTDRKMNNHHSTQVLHGSGQHGMQPSGNNVLNGLANGATGLQSSASSTSTRDDSTIVGLHYKIGKKIGEGSFGVLFEGVNMINNVPVAIKFEPRKTDAPQLKDEYRTYKILSGSEGIPQAYYFGQEGLHNILVIDLLGPSLEDLFDWCGRRFSIKTVVHVAIQMITLIEELHDHDLIYRDIKPDNFLIGRPNQPDANMVHLIDFGMAKLYRDPKTKQHIPYREKKSLSGTARYMSINTHLGREQSRRDDMEALGHVFFYFLRGQLPWQGLKAANNKLKYEKIGEKKRSTNVYDLSQGLPVQFGRYLEIVRNLGFEETPDYEGYRKLLLSVLDELGQKLDGEYDWMKLNGGRGWDLAINKKPNLHGYGHPTPPNEKSKRHRNKFNQVPLAVNNLNGSNVPLQSHSPLPGGTDLTQGVSNAPQQPQQIMSQQQYQQHTQQRLDPMSYEAYKQQVQQRYAQQPQPTQQKAQKSPNNDTSQQQFSQNRQQQPQYQFQQNQPQNGKVQVADSNSEKGFFSKLGCC.

Residues 26-42 (HSTQVLHGSGQHGMQPS) show a composition bias toward polar residues. The tract at residues 26–68 (HSTQVLHGSGQHGMQPSGNNVLNGLANGATGLQSSASSTSTRD) is disordered. The segment covering 43-65 (GNNVLNGLANGATGLQSSASSTS) has biased composition (low complexity). The region spanning 77–361 (YKIGKKIGEG…QKLDGEYDWM (285 aa)) is the Protein kinase domain. Residues 83–91 (IGEGSFGVL) and Lys-106 each bind ATP. The Proton acceptor role is filled by Asp-196. Polar residues-rich tracts occupy residues 407–420 (NNLNGSNVPLQSHS) and 427–436 (DLTQGVSNAP). Residues 407 to 524 (NNLNGSNVPL…NGKVQVADSN (118 aa)) are disordered. Composition is skewed to low complexity over residues 437–453 (QQPQQIMSQQQYQQHTQ) and 463–514 (AYKQ…NQPQ). 2 S-palmitoyl cysteine lipidation sites follow: Cys-535 and Cys-536.

It belongs to the protein kinase superfamily. CK1 Ser/Thr protein kinase family. Casein kinase I subfamily.

The enzyme catalyses L-seryl-[protein] + ATP = O-phospho-L-seryl-[protein] + ADP + H(+). The catalysed reaction is L-threonyl-[protein] + ATP = O-phospho-L-threonyl-[protein] + ADP + H(+). In terms of biological role, casein kinases are operationally defined by their preferential utilization of acidic proteins such as caseins as substrates. This Kluyveromyces lactis (strain ATCC 8585 / CBS 2359 / DSM 70799 / NBRC 1267 / NRRL Y-1140 / WM37) (Yeast) protein is Casein kinase I homolog RAG8 (RAG8).